A 362-amino-acid chain; its full sequence is 3-isopropylmalate dehydrogenase (362 aa).

77–88 (GPKWGTGAVRPE) is a binding site for NAD(+). Arg95, Arg105, Arg134, and Asp223 together coordinate substrate. Positions 223, 248, and 252 each coordinate Mg(2+). Position 287–298 (287–298 (GSAPDLPKGKVN)) interacts with NAD(+).

This sequence belongs to the isocitrate and isopropylmalate dehydrogenases family. Homodimer. Mg(2+) is required as a cofactor. Mn(2+) serves as cofactor.

The protein localises to the cytoplasm. It catalyses the reaction (2R,3S)-3-isopropylmalate + NAD(+) = 4-methyl-2-oxopentanoate + CO2 + NADH. It participates in amino-acid biosynthesis; L-leucine biosynthesis; L-leucine from 3-methyl-2-oxobutanoate: step 3/4. Functionally, catalyzes the oxidation of 3-carboxy-2-hydroxy-4-methylpentanoate (3-isopropylmalate) to 3-carboxy-4-methyl-2-oxopentanoate. The product decarboxylates to 4-methyl-2 oxopentanoate. This is 3-isopropylmalate dehydrogenase (LEU2) from Zygosaccharomyces bailii.